Here is a 928-residue protein sequence, read N- to C-terminus: Echinoderm microtubule-associated protein-like 4 (928 aa).

The tract at residues 1–189 (MDGFAGSLDD…IPSDVENYDD (189 aa)) is microtubule-binding. The stretch at 14-63 (AASTSDVQDRLSALELRVQQQEDEITVLKAALADVLRRLAISEDQVATVR) forms a coiled coil. A disordered region spans residues 107–131 (SAAKSVKRSSTIEKSHNSWDASEES). The span at 116–131 (STIEKSHNSWDASEES) shows a compositional bias: basic and acidic residues. 13 WD repeats span residues 199–237 (LKLE…LFNY), 241–288 (TQRH…VWDS), 296–336 (VIGL…VWDW), 343–378 (AEIK…FWTW), 385–424 (RKQG…IWSK), 442–480 (QISR…MWDH), 485–521 (EREI…LRGT), 524–563 (DGFQ…LWNS), 567–604 (SLEW…VLDA), 610–646 (VSIH…LYNV), 653–692 (YSRY…YWDI), 702–760 (RSDC…LFQY), and 767–806 (APSH…QWRL). The interval 821–928 (SSSAVNSPVV…ENQDDSSPLS (108 aa)) is disordered. Over residues 836–845 (QPNTPTNLPQ) the composition is skewed to polar residues. The segment covering 867 to 876 (DALEQPEELN) has biased composition (acidic residues). Polar residues predominate over residues 877-898 (EVQSEKCSSQPEGANGQEPSNE).

This sequence belongs to the WD repeat EMAP family. As to quaternary structure, homotrimer; self-association is mediated by the N-terminal coiled coil.

It is found in the cytoplasm. The protein localises to the cytoskeleton. It localises to the spindle. Its subcellular location is the microtubule organizing center. The protein resides in the midbody. Its function is as follows. Essential for the formation and stability of microtubules (MTs). Required for the organization of the mitotic spindle and for the proper attachment of kinetochores to MTs. Promotes the recruitment of NUDC to the mitotic spindle for mitotic progression. In Xenopus tropicalis (Western clawed frog), this protein is Echinoderm microtubule-associated protein-like 4 (eml4).